A 99-amino-acid polypeptide reads, in one-letter code: NADH-quinone oxidoreductase subunit K (99 aa).

Helical transmembrane passes span 3-23 (ILFS…GILI), 28-48 (LIVF…FVAF), and 59-79 (IWVF…LAII).

This sequence belongs to the complex I subunit 4L family. As to quaternary structure, NDH-1 is composed of 14 different subunits. Subunits NuoA, H, J, K, L, M, N constitute the membrane sector of the complex.

The protein localises to the cell inner membrane. The enzyme catalyses a quinone + NADH + 5 H(+)(in) = a quinol + NAD(+) + 4 H(+)(out). Functionally, NDH-1 shuttles electrons from NADH, via FMN and iron-sulfur (Fe-S) centers, to quinones in the respiratory chain. The immediate electron acceptor for the enzyme in this species is believed to be ubiquinone. Couples the redox reaction to proton translocation (for every two electrons transferred, four hydrogen ions are translocated across the cytoplasmic membrane), and thus conserves the redox energy in a proton gradient. This Protochlamydia amoebophila (strain UWE25) protein is NADH-quinone oxidoreductase subunit K.